We begin with the raw amino-acid sequence, 314 residues long: PDZ domain-containing protein GIPC2 (314 aa).

Over residues 1–12 the composition is skewed to basic residues; the sequence is MPLGLRGKKKAA. Positions 1–36 are disordered; that stretch reads MPLGLRGKKKAAKSKEAARLVEGERSSGSQGVPGPP. Positions 13-25 are enriched in basic and acidic residues; sequence KSKEAARLVEGER. Positions 117-197 constitute a PDZ domain; the sequence is EVNVYKSEDS…EELFTLQLIE (81 aa).

Belongs to the GIPC family. In terms of assembly, probably interacts with SEMA5A. In terms of tissue distribution, expressed in kidney and lung (at protein level).

The protein localises to the cytoplasm. The sequence is that of PDZ domain-containing protein GIPC2 (Gipc2) from Mus musculus (Mouse).